A 134-amino-acid chain; its full sequence is Cytochrome b5 isoform B (134 aa).

The region spanning 5-81 (AKIFTLSEVS…MEQYYVGEID (77 aa)) is the Cytochrome b5 heme-binding domain. Heme is bound by residues His40 and His64. The helical transmembrane segment at 107 to 127 (FIIKLLQFLVPLAILGLAVGI) threads the bilayer.

It belongs to the cytochrome b5 family. Interacts with CER1, FAH1, FAH2 and BI-1.

The protein localises to the endoplasmic reticulum membrane. Functionally, membrane bound hemoprotein which function as an electron carrier for several membrane bound oxygenases, including fatty acid desaturases. The polypeptide is Cytochrome b5 isoform B (Arabidopsis thaliana (Mouse-ear cress)).